The sequence spans 402 residues: Phosphoglycerate kinase (402 aa).

Substrate is bound by residues 24-26 (DFN), Arg-40, 63-66 (HFGR), Arg-122, and Arg-155. ATP contacts are provided by residues Lys-206, Gly-297, Glu-328, and 357 to 360 (GGDS).

The protein belongs to the phosphoglycerate kinase family. In terms of assembly, monomer.

It is found in the cytoplasm. It catalyses the reaction (2R)-3-phosphoglycerate + ATP = (2R)-3-phospho-glyceroyl phosphate + ADP. The protein operates within carbohydrate degradation; glycolysis; pyruvate from D-glyceraldehyde 3-phosphate: step 2/5. This is Phosphoglycerate kinase from Synechococcus sp. (strain RCC307).